Reading from the N-terminus, the 226-residue chain is Ribosomal RNA large subunit methyltransferase E (226 aa).

The disordered stretch occupies residues 1 to 25 (MVKPPAGGNEGGRGKPARLKTAYGR). S-adenosyl-L-methionine is bound by residues Gly82, Trp84, Asp100, Asp116, and Asp140. Residue Lys180 is the Proton acceptor of the active site.

The protein belongs to the class I-like SAM-binding methyltransferase superfamily. RNA methyltransferase RlmE family.

It is found in the cytoplasm. The catalysed reaction is uridine(2552) in 23S rRNA + S-adenosyl-L-methionine = 2'-O-methyluridine(2552) in 23S rRNA + S-adenosyl-L-homocysteine + H(+). Specifically methylates the uridine in position 2552 of 23S rRNA at the 2'-O position of the ribose in the fully assembled 50S ribosomal subunit. The polypeptide is Ribosomal RNA large subunit methyltransferase E (Caulobacter vibrioides (strain ATCC 19089 / CIP 103742 / CB 15) (Caulobacter crescentus)).